Here is a 601-residue protein sequence, read N- to C-terminus: Elongation factor 4 (601 aa).

Residues 8–189 (EQIRNFGIIA…LIVRKAPPPK (182 aa)) form the tr-type G domain. 20 to 25 (DHGKST) contacts GTP.

The protein belongs to the TRAFAC class translation factor GTPase superfamily. Classic translation factor GTPase family. LepA subfamily.

It localises to the cell membrane. It catalyses the reaction GTP + H2O = GDP + phosphate + H(+). Its function is as follows. Required for accurate and efficient protein synthesis under certain stress conditions. May act as a fidelity factor of the translation reaction, by catalyzing a one-codon backward translocation of tRNAs on improperly translocated ribosomes. Back-translocation proceeds from a post-translocation (POST) complex to a pre-translocation (PRE) complex, thus giving elongation factor G a second chance to translocate the tRNAs correctly. Binds to ribosomes in a GTP-dependent manner. This Tropheryma whipplei (strain Twist) (Whipple's bacillus) protein is Elongation factor 4.